Reading from the N-terminus, the 370-residue chain is MPGKQLSDPCVDCSDAEAILTLRTRRLCQTCYARFVNFKVFKRMENYRLRRNMPKTGPCKLLLPLSCGISSSVLLHILNAQIQLELAKSHPSPGFDLHVLVIEPSSISHSSPSYDEGFGLLQQTFPLHSFTRIPLHSIFELDPELQEVISQFSKDGFVDDAGLSAKERLDAFRASIPTSTSKVDVDYVLITRLVVAFAKKIACRGVLWGDSDTRLAAKTLANVAKGRGSSLTWQVCDGMSPFGVEFNFPLRDLFKAEVDNYASFFPELTRIIIPDEPPSENVLTKNLSIDELMMRYVQTQGEKYPGVMANVTRTASKLQASLTPANVPQCSFCGAFMLNSGNNGGGDTTGASRALELCYACTRSRPELTC.

It belongs to the CTU2/NCS2 family.

The protein resides in the cytoplasm. The protein operates within tRNA modification; 5-methoxycarbonylmethyl-2-thiouridine-tRNA biosynthesis. In terms of biological role, plays a central role in 2-thiolation of mcm(5)S(2)U at tRNA wobble positions of tRNA(Lys), tRNA(Glu) and tRNA(Gln). May act by forming a heterodimer with ncs6 that ligates sulfur from thiocarboxylated urm1 onto the uridine of tRNAs at wobble position. Prior mcm(5) tRNA modification by the elongator complex is required for 2-thiolation. May also be involved in protein urmylation. The sequence is that of Cytoplasmic tRNA 2-thiolation protein 2 (ncs2) from Neosartorya fischeri (strain ATCC 1020 / DSM 3700 / CBS 544.65 / FGSC A1164 / JCM 1740 / NRRL 181 / WB 181) (Aspergillus fischerianus).